Here is a 393-residue protein sequence, read N- to C-terminus: NAD(P)H-quinone oxidoreductase subunit H, chloroplastic (393 aa).

It belongs to the complex I 49 kDa subunit family. In terms of assembly, NDH is composed of at least 16 different subunits, 5 of which are encoded in the nucleus.

It localises to the plastid. It is found in the chloroplast thylakoid membrane. The catalysed reaction is a plastoquinone + NADH + (n+1) H(+)(in) = a plastoquinol + NAD(+) + n H(+)(out). It carries out the reaction a plastoquinone + NADPH + (n+1) H(+)(in) = a plastoquinol + NADP(+) + n H(+)(out). In terms of biological role, NDH shuttles electrons from NAD(P)H:plastoquinone, via FMN and iron-sulfur (Fe-S) centers, to quinones in the photosynthetic chain and possibly in a chloroplast respiratory chain. The immediate electron acceptor for the enzyme in this species is believed to be plastoquinone. Couples the redox reaction to proton translocation, and thus conserves the redox energy in a proton gradient. The sequence is that of NAD(P)H-quinone oxidoreductase subunit H, chloroplastic from Populus alba (White poplar).